Reading from the N-terminus, the 312-residue chain is Ribosomal protein L11 methyltransferase (312 aa).

S-adenosyl-L-methionine contacts are provided by T162, G183, D205, and N248.

Belongs to the methyltransferase superfamily. PrmA family.

Its subcellular location is the cytoplasm. The catalysed reaction is L-lysyl-[protein] + 3 S-adenosyl-L-methionine = N(6),N(6),N(6)-trimethyl-L-lysyl-[protein] + 3 S-adenosyl-L-homocysteine + 3 H(+). Its function is as follows. Methylates ribosomal protein L11. The chain is Ribosomal protein L11 methyltransferase from Bacillus cereus (strain ATCC 10987 / NRS 248).